Reading from the N-terminus, the 59-residue chain is Large ribosomal subunit protein bL32 (59 aa).

A disordered region spans residues 1–40 (MAVQQNKKSPSKRGMHRSHDFLRTTPLSVDPGTGEVHLRH).

The protein belongs to the bacterial ribosomal protein bL32 family.

This Nitrosospira multiformis (strain ATCC 25196 / NCIMB 11849 / C 71) protein is Large ribosomal subunit protein bL32.